A 136-amino-acid polypeptide reads, in one-letter code: Ribonuclease P protein component (136 aa).

Positions 116–136 are disordered; the sequence is RPQRAAAKGSAGTTQKGTPRA. Residues 126 to 136 are compositionally biased toward polar residues; that stretch reads AGTTQKGTPRA.

The protein belongs to the RnpA family. As to quaternary structure, consists of a catalytic RNA component (M1 or rnpB) and a protein subunit.

It carries out the reaction Endonucleolytic cleavage of RNA, removing 5'-extranucleotides from tRNA precursor.. Functionally, RNaseP catalyzes the removal of the 5'-leader sequence from pre-tRNA to produce the mature 5'-terminus. It can also cleave other RNA substrates such as 4.5S RNA. The protein component plays an auxiliary but essential role in vivo by binding to the 5'-leader sequence and broadening the substrate specificity of the ribozyme. The protein is Ribonuclease P protein component of Pseudarthrobacter chlorophenolicus (strain ATCC 700700 / DSM 12829 / CIP 107037 / JCM 12360 / KCTC 9906 / NCIMB 13794 / A6) (Arthrobacter chlorophenolicus).